Consider the following 220-residue polypeptide: MNLKQLAGEYAANFVNDGMKIGLGTGSTVYWTIQKLGERVKEGLSFQAVPTSKETEALAQQLNIPLISLNDVQSLDLTIDGADEIDSNLQLIKGGGGALLREKIVASSSKKLIIIADESKLVTHLGTFPLPIEIIPFSWKQTENKIQSLGCQTTLRLKNNETYITDNNNMIIDCIFPNHISNPVHLHTQLKMITGVVETGLFISMTSTAIIGTKNGIKKL.

Substrate contacts are provided by residues 25 to 28, 80 to 83, and 93 to 96; these read TGST, DGAD, and KGGG. Residue Glu102 is the Proton acceptor of the active site. Lys120 serves as a coordination point for substrate.

The protein belongs to the ribose 5-phosphate isomerase family. Homodimer.

It carries out the reaction aldehydo-D-ribose 5-phosphate = D-ribulose 5-phosphate. The protein operates within carbohydrate degradation; pentose phosphate pathway; D-ribose 5-phosphate from D-ribulose 5-phosphate (non-oxidative stage): step 1/1. Functionally, catalyzes the reversible conversion of ribose-5-phosphate to ribulose 5-phosphate. The chain is Ribose-5-phosphate isomerase A from Bacillus cereus (strain ATCC 14579 / DSM 31 / CCUG 7414 / JCM 2152 / NBRC 15305 / NCIMB 9373 / NCTC 2599 / NRRL B-3711).